The sequence spans 369 residues: Chaperone protein DnaJ (369 aa).

Positions 7 to 73 constitute a J domain; the sequence is DYYEILGVPR…QKRAMYDRFG (67 aa). The CR-type zinc finger occupies 143-225; the sequence is GAEIPVEYER…CGGSGRVLRK (83 aa). Cys156, Cys159, Cys173, Cys176, Cys199, Cys202, Cys213, and Cys216 together coordinate Zn(2+). CXXCXGXG motif repeat units follow at residues 156 to 163, 173 to 180, 199 to 206, and 213 to 220; these read CPRCGGTG, CPSCGGTG, CERCGGTG, and CHECGGSG.

The protein belongs to the DnaJ family. Homodimer. The cofactor is Zn(2+).

Its subcellular location is the cytoplasm. Its function is as follows. Participates actively in the response to hyperosmotic and heat shock by preventing the aggregation of stress-denatured proteins and by disaggregating proteins, also in an autonomous, DnaK-independent fashion. Unfolded proteins bind initially to DnaJ; upon interaction with the DnaJ-bound protein, DnaK hydrolyzes its bound ATP, resulting in the formation of a stable complex. GrpE releases ADP from DnaK; ATP binding to DnaK triggers the release of the substrate protein, thus completing the reaction cycle. Several rounds of ATP-dependent interactions between DnaJ, DnaK and GrpE are required for fully efficient folding. Also involved, together with DnaK and GrpE, in the DNA replication of plasmids through activation of initiation proteins. This Thermotoga petrophila (strain ATCC BAA-488 / DSM 13995 / JCM 10881 / RKU-1) protein is Chaperone protein DnaJ.